Consider the following 303-residue polypeptide: Bidirectional sugar transporter SWEET14 (303 aa).

Residues 1-9 (MAGMSLQHP) lie on the Extracellular side of the membrane. The chain crosses the membrane as a helical span at residues 10-30 (WAFAFGLLGNIISFMTYLAPL). Positions 13–98 (AFGLLGNIIS…AVYLVYAPKK (86 aa)) constitute a MtN3/slv 1 domain. Topologically, residues 31–44 (PTFYRIYKSKSTQG) are cytoplasmic. Residues 45-65 (FQSVPYVVALFSAMLWIYYAL) traverse the membrane as a helical segment. Residues 66–72 (LKSDECL) lie on the Extracellular side of the membrane. A helical transmembrane segment spans residues 73–93 (LITINSAGCVIETIYIAVYLV). Residues 94-105 (YAPKKAKMFTAK) lie on the Cytoplasmic side of the membrane. The helical transmembrane segment at 106–126 (LLLLVNVGVFGLILLLTLLLS) threads the bilayer. Residues 127–133 (AGDRRIV) are Extracellular-facing. A helical transmembrane segment spans residues 134 to 154 (VLGWVCVGFSVSVFVAPLSII). One can recognise a MtN3/slv 2 domain in the interval 134–217 (VLGWVCVGFS…MGLYAMYRNS (84 aa)). Topologically, residues 155–167 (RLVVRTKSVEFMP) are cytoplasmic. Residues 168-188 (FSLSFSLTISAVVWFLYGLLI) form a helical membrane-spanning segment. At 189–192 (KDKY) the chain is on the extracellular side. A helical membrane pass occupies residues 193-213 (VALPNVLGFSFGVIQMGLYAM). Residues 214–303 (YRNSTPKAVL…AGAGEKKVAA (90 aa)) are Cytoplasmic-facing. Residues 266–290 (HPVDVESPPAEAPPQEDDKAAAATA) are disordered.

It belongs to the SWEET sugar transporter family. As to quaternary structure, forms homooligomers and/or heterooligomers.

Its subcellular location is the cell membrane. Its function is as follows. Mediates both low-affinity uptake and efflux of sugar across the plasma membrane. The sequence is that of Bidirectional sugar transporter SWEET14 (SWEET14) from Oryza sativa subsp. indica (Rice).